A 237-amino-acid polypeptide reads, in one-letter code: Riboflavin kinase (237 aa).

A disordered region spans residues 1 to 23 (MSLPNPDNRPLLIGPPTGPEAPF). Mg(2+)-binding residues include Thr-46 and Asn-48. Residues 82 to 126 (VLYQKPPTSEPVMMDPVQQQQQQQQQQRNQQQQQEGGVGSAQQEK) are disordered. A compositionally biased stretch (low complexity) spans 99–115 (QQQQQQQQQQRNQQQQQ). Glu-158 functions as the Nucleophile in the catalytic mechanism.

It belongs to the flavokinase family. Requires Zn(2+) as cofactor. Mg(2+) is required as a cofactor.

The enzyme catalyses riboflavin + ATP = FMN + ADP + H(+). The protein operates within cofactor biosynthesis; FMN biosynthesis; FMN from riboflavin (ATP route): step 1/1. Its function is as follows. Catalyzes the phosphorylation of riboflavin (vitamin B2) to form flavin mononucleotide (FMN) coenzyme. This chain is Riboflavin kinase (fmn1), found in Neurospora crassa (strain ATCC 24698 / 74-OR23-1A / CBS 708.71 / DSM 1257 / FGSC 987).